Here is a 253-residue protein sequence, read N- to C-terminus: MTTIDLNCDLGESFGAYKMGNDDEILPFVSSINVACGFHAGDPSVMRQTVEKAMQHNVAIGAHPGFPDLIGFGRRNMNVPASEVYDYVLYQIGALDGFVKAAGGKMHHVKPHGALYNMAATNPEIADAIAKAIYHINPSLLLYGLANSEAFIQAAEKYNITLIQEAFADRTYKQDGTLTSRTEENALIKNEEEAIKQVLQMVKEGYVNSVNGEKVAVQAQTICLHGDGEKAVQFAKRIYRTFEHNGISICAPK.

The protein belongs to the LamB/PxpA family. In terms of assembly, forms a complex composed of PxpA, PxpB and PxpC.

It catalyses the reaction 5-oxo-L-proline + ATP + 2 H2O = L-glutamate + ADP + phosphate + H(+). In terms of biological role, catalyzes the cleavage of 5-oxoproline to form L-glutamate coupled to the hydrolysis of ATP to ADP and inorganic phosphate. In Bacillus cereus (strain AH187), this protein is 5-oxoprolinase subunit A.